Consider the following 131-residue polypeptide: UPF0102 protein YraN (131 aa).

Positions 1-20 (MATVPTRSGSPRQLTTKQTG) are disordered.

This sequence belongs to the UPF0102 family.

This is UPF0102 protein YraN from Escherichia coli O139:H28 (strain E24377A / ETEC).